Here is a 268-residue protein sequence, read N- to C-terminus: uncharacterized protein (268 aa).

An RING-type; degenerate zinc finger spans residues 21–61 (CVICLQKDGLRAQLSPCGHDQFDYSCICRWMDQSLTCPICK).

The protein localises to the mitochondrion. It localises to the nucleus. This is an uncharacterized protein from Schizosaccharomyces pombe (strain 972 / ATCC 24843) (Fission yeast).